The sequence spans 164 residues: Large ribosomal subunit protein bL21 (164 aa).

Residues 105-164 (KAPTIGPRAKKEKKVEAAPADGEAPAKKAPAKKAAAKKAAPKAAAKKAPAKKAAPKAKSE) are disordered. The span at 133-164 (APAKKAAAKKAAPKAAAKKAPAKKAAPKAKSE) shows a compositional bias: basic residues.

This sequence belongs to the bacterial ribosomal protein bL21 family. Part of the 50S ribosomal subunit. Contacts protein L20.

This protein binds to 23S rRNA in the presence of protein L20. This is Large ribosomal subunit protein bL21 from Afipia carboxidovorans (strain ATCC 49405 / DSM 1227 / KCTC 32145 / OM5) (Oligotropha carboxidovorans).